The following is a 1122-amino-acid chain: Transcription-repair-coupling factor (1122 aa).

Residues 593 to 758 form the Helicase ATP-binding domain; sequence DLRNGMLMDR…MTGLKELSII (166 aa). 606-613 serves as a coordination point for ATP; that stretch reads GDVGFGKT. Positions 711–714 match the DEEQ box motif; it reads DEEQ. Positions 779–933 constitute a Helicase C-terminal domain; the sequence is IIRDALLREH…GFTIASRDMD (155 aa).

The protein in the N-terminal section; belongs to the UvrB family. This sequence in the C-terminal section; belongs to the helicase family. RecG subfamily.

The protein resides in the cytoplasm. Its function is as follows. Couples transcription and DNA repair by recognizing RNA polymerase (RNAP) stalled at DNA lesions. Mediates ATP-dependent release of RNAP and its truncated transcript from the DNA, and recruitment of nucleotide excision repair machinery to the damaged site. The sequence is that of Transcription-repair-coupling factor from Rickettsia conorii (strain ATCC VR-613 / Malish 7).